The following is a 142-amino-acid chain: Extracellular globin-1 (142 aa).

The region spanning Glu1–Ile142 is the Globin domain. Cys2 and Cys131 are joined by a disulfide. Position 94 (His94) interacts with heme b.

The protein belongs to the globin family. As to quaternary structure, the extracellular hemoglobin of the earthworm consists of 12 subunits that have a hexagonal bilayer structure with a molecular weight near 3.8 million. Each one-twelfth subunit is composed primarily of disulfide linked trimers (chains A, B, and C) and monomers (chain D).

This Lumbricus terrestris (Common earthworm) protein is Extracellular globin-1.